The chain runs to 327 residues: MFNDIPVFDYEDIQLIPNKCIITSRSQADTSVTLGKYQFKLPVIPANMQTIIDETIAEQLAKEGYFYIMHRFDEDSRKPFIKRMHEQGLIASISVGVKACEYEFVTSLKEDAPEFITIDIAHGHANSVIDMIKHIKTELPETFVIAGNVGTPEAVRELENAGADATKVGIGPGKVCITKVKTGFGTGGWQLAALRWCAKAARKPIIADGGIRTHGDIAKSIRFGASMVMIGSLFAGHIESPGKTVEVDGETFKEYYGSASEYQKGEHKNVEGKKILLPTKGHLSDTLTEMQQDLQSSISYAGGKDLDSLRHVDYVIVKNSIWNGDSI.

C176 acts as the Thioimidate intermediate in catalysis. Residue 205–228 (IIADGGIRTHGDIAKSIRFGASMV) coordinates NADP(+).

This sequence belongs to the IMPDH/GMPR family. GuaC type 2 subfamily.

The catalysed reaction is IMP + NH4(+) + NADP(+) = GMP + NADPH + 2 H(+). Its function is as follows. Catalyzes the irreversible NADPH-dependent deamination of GMP to IMP. It functions in the conversion of nucleobase, nucleoside and nucleotide derivatives of G to A nucleotides, and in maintaining the intracellular balance of A and G nucleotides. In Streptococcus pyogenes serotype M3 (strain ATCC BAA-595 / MGAS315), this protein is GMP reductase.